The sequence spans 61 residues: DNA-directed RNA polymerase subunit Rpo6 (61 aa).

This sequence belongs to the archaeal Rpo6/eukaryotic RPB6 RNA polymerase subunit family. As to quaternary structure, part of the RNA polymerase complex.

The protein localises to the cytoplasm. The catalysed reaction is RNA(n) + a ribonucleoside 5'-triphosphate = RNA(n+1) + diphosphate. Its function is as follows. DNA-dependent RNA polymerase (RNAP) catalyzes the transcription of DNA into RNA using the four ribonucleoside triphosphates as substrates. This Methanothermobacter thermautotrophicus (strain ATCC 29096 / DSM 1053 / JCM 10044 / NBRC 100330 / Delta H) (Methanobacterium thermoautotrophicum) protein is DNA-directed RNA polymerase subunit Rpo6.